A 376-amino-acid chain; its full sequence is Putative type I restriction enzyme MpnIIP endonuclease subunit N-terminal part (376 aa).

The N-terminal section of a putative type I restriction enzyme that if reconstituted might recognize 5'-GAN(7)TAY-3' and cleave a random distance away. Subunit R is required for both nuclease and ATPase activities, but not for modification. The protein is Putative type I restriction enzyme MpnIIP endonuclease subunit N-terminal part of Mycoplasma pneumoniae (strain ATCC 29342 / M129 / Subtype 1) (Mycoplasmoides pneumoniae).